A 283-amino-acid polypeptide reads, in one-letter code: Non-selective voltage-gated ion channel VDAC1 (283 aa).

N-acetylalanine is present on A2. K12 lines the ATP pocket. A Glycyl lysine isopeptide (Lys-Gly) (interchain with G-Cter in ubiquitin) cross-link involves residue K12. Phosphoserine is present on S13. At T19 the chain carries Phosphothreonine. Position 20 (K20) interacts with ATP. The residue at position 20 (K20) is an N6-acetyllysine; alternate. Residue K20 is modified to N6-succinyllysine; alternate. K20 is covalently cross-linked (Glycyl lysine isopeptide (Lys-Gly) (interchain with G-Cter in ubiquitin); alternate). A run of 2 beta stranded transmembrane segments spans residues 26–35 (LIKLDLKTKS) and 39–47 (LEFTSSGSA). Residues K53 and K61 each participate in a glycyl lysine isopeptide (Lys-Gly) (interchain with G-Cter in ubiquitin) cross-link. The chain crosses the membrane as a beta stranded span at residues 54-64 (VTGSLETKYRW). The residue at position 67 (Y67) is a Phosphotyrosine. The next 3 membrane-spanning stretches (beta stranded) occupy residues 69–76 (LTFTEKWN), 80–89 (TLGTEITVED), and 95–104 (LKLTFDSSFS). T107 carries the phosphothreonine modification. K109 carries the post-translational modification N6-acetyllysine; alternate. K109 participates in a covalent cross-link: Glycyl lysine isopeptide (Lys-Gly) (interchain with G-Cter in ubiquitin); alternate. K110 participates in a covalent cross-link: Glycyl lysine isopeptide (Lys-Gly) (interchain with G-Cter in ubiquitin). The next 4 beta stranded transmembrane spans lie at 111–120 (NAKIKTGYKR), 123–130 (INLGCDMD), 137–145 (SIRGALVLG), and 150–158 (LAGYQMNFE). K161 participates in a covalent cross-link: Glycyl lysine isopeptide (Lys-Gly) (interchain with G-Cter in ubiquitin). The next 6 membrane-spanning stretches (beta stranded) occupy residues 163–175 (RVTQSNFAVGYKT), 178–185 (FQLHTNVN), 189–198 (EFGGSIYQKV), 202–211 (LETAVNLAWT), 218–227 (RFGIAAKYQI), and 231–238 (ACFSAKVN). S193 carries the phosphoserine; by NEK1 modification. Phosphoserine is present on S240. 242 to 244 (LIG) contacts NAD(+). The chain crosses the membrane as a beta stranded span at residues 242–251 (LIGLGYTQTL). At K252 the chain carries N6-acetyllysine. A beta stranded transmembrane segment spans residues 254-263 (GIKLTLSALL). 260-264 (SALLD) is a binding site for NAD(+). Position 266 is an N6-acetyllysine; alternate (K266). K266 is covalently cross-linked (Glycyl lysine isopeptide (Lys-Gly) (interchain with G-Cter in ubiquitin); alternate). Residues 273-282 (HKLGLGLEFQ) traverse the membrane as a beta stranded segment. A Glycyl lysine isopeptide (Lys-Gly) (interchain with G-Cter in ubiquitin) cross-link involves residue K274.

Belongs to the eukaryotic mitochondrial porin family. Homodimer and homotrimer; in response to cyclic AMP or calcium; oligomerization is required for scramblase activity. Component of the mitochondrial permeability transition pore complex (mPTPC), at least composed of SPG7, VDAC1 and PPIF. Interacts with SPG7, NIPSNAP2 and SLC25A30. Interacts with hexokinases including HK1. The HK1-VDAC1 complex interacts with ATF2. Interacts with BCL2L1. Interacts with BAK1. Interacts with RTL10/BOP (via BH3 domain). Interacts with amyloid-beta and APP; induces VDAC1 dephosphorylation. Interacts with TMEM41B. Interacts with BCAP31. Interacts with HSPA9; this interaction couples ITPR1 to VDAC1. In terms of assembly, (Microbial infection) Interacts with influenza A virus PB1-F2 protein. Phosphorylation at Ser-193 by NEK1 promotes the closed conformational state preventing excessive mitochondrial membrane permeability and subsequent apoptotic cell death after injury. Phosphorylation by the AKT-GSK3B axis stabilizes the protein probably by preventing ubiquitin-mediated proteasomal degradation. In terms of processing, ubiquitinated. Undergoes monoubiquitination and polyubiquitination by PRKN; monoubiquitination at Lys-274 inhibits apoptosis, whereas polyubiquitination leads to its degradation and promotes mitophagy. Deubiquitinated by USP30. As to expression, expressed in erythrocytes (at protein level). Expressed in heart, liver and skeletal muscle.

It localises to the mitochondrion outer membrane. The protein localises to the cell membrane. The protein resides in the membrane raft. The enzyme catalyses chloride(in) = chloride(out). It carries out the reaction K(+)(in) = K(+)(out). It catalyses the reaction ATP(in) = ATP(out). The catalysed reaction is Ca(2+)(in) = Ca(2+)(out). The enzyme catalyses Na(+)(in) = Na(+)(out). It carries out the reaction Mg(2+)(in) = Mg(2+)(out). It catalyses the reaction L-glutamate(out) = L-glutamate(in). The catalysed reaction is dopamine(out) = dopamine(in). The enzyme catalyses acetylcholine(in) = acetylcholine(out). It carries out the reaction Fe(III)-[cytochrome c](out) = Fe(III)-[cytochrome c](in). It catalyses the reaction a 1,2-diacyl-sn-glycero-3-phosphocholine(in) = a 1,2-diacyl-sn-glycero-3-phosphocholine(out). The catalysed reaction is a 1,2-diacyl-sn-glycero-3-phospho-L-serine(in) = a 1,2-diacyl-sn-glycero-3-phospho-L-serine(out). Inhibited by nitric oxide. Non-selective voltage-gated ion channel that mediates the transport of anions and cations through the mitochondrion outer membrane and plasma membrane. The channel at the outer mitochondrial membrane allows diffusion of small hydrophilic molecules; in the plasma membrane it is involved in cell volume regulation and apoptosis. It adopts an open conformation at low or zero membrane potential and a closed conformation at potentials above 30-40 mV. The open state has a weak anion selectivity whereas the closed state is cation-selective. Binds various signaling molecules, including the sphingolipid ceramide, the phospholipid phosphatidylcholine, and the sterols cholesterol and oxysterol. In depolarized mitochondria, acts downstream of PRKN and PINK1 to promote mitophagy or prevent apoptosis; polyubiquitination by PRKN promotes mitophagy, while monoubiquitination by PRKN decreases mitochondrial calcium influx which ultimately inhibits apoptosis. May participate in the formation of the permeability transition pore complex (PTPC) responsible for the release of mitochondrial products that triggers apoptosis. May mediate ATP export from cells. Part of a complex composed of HSPA9, ITPR1 and VDAC1 that regulates mitochondrial calcium-dependent apoptosis by facilitating calcium transport from the ER lumen to the mitochondria intermembrane space thus providing calcium for the downstream calcium channel MCU that directly releases it into mitochondria matrix. Mediates cytochrome c efflux. Its function is as follows. Catalyzes the scrambling of phospholipids across the outer mitochondrial membrane; the mechanism is unrelated to channel activity and is capable of translocating both anionic and zwitterionic phospholipids. This Homo sapiens (Human) protein is Non-selective voltage-gated ion channel VDAC1.